Here is a 345-residue protein sequence, read N- to C-terminus: Biotin synthase (345 aa).

A Radical SAM core domain is found at 59-286 (NEVQLSTLLS…TTMVRLSAGR (228 aa)). 3 residues coordinate [4Fe-4S] cluster: Cys74, Cys78, and Cys81. [2Fe-2S] cluster-binding residues include Cys118, Cys149, Cys209, and Arg281.

The protein belongs to the radical SAM superfamily. Biotin synthase family. As to quaternary structure, homodimer. Requires [4Fe-4S] cluster as cofactor. [2Fe-2S] cluster is required as a cofactor.

The enzyme catalyses (4R,5S)-dethiobiotin + (sulfur carrier)-SH + 2 reduced [2Fe-2S]-[ferredoxin] + 2 S-adenosyl-L-methionine = (sulfur carrier)-H + biotin + 2 5'-deoxyadenosine + 2 L-methionine + 2 oxidized [2Fe-2S]-[ferredoxin]. It functions in the pathway cofactor biosynthesis; biotin biosynthesis; biotin from 7,8-diaminononanoate: step 2/2. Functionally, catalyzes the conversion of dethiobiotin (DTB) to biotin by the insertion of a sulfur atom into dethiobiotin via a radical-based mechanism. The protein is Biotin synthase of Leptothrix cholodnii (strain ATCC 51168 / LMG 8142 / SP-6) (Leptothrix discophora (strain SP-6)).